The chain runs to 185 residues: Comitin (185 aa).

The region spanning methionine 1–proline 123 is the Bulb-type lectin domain. A disordered region spans residues serine 138–tyrosine 185. Residues proline 141–glutamine 157 show a composition bias toward low complexity. 5 tandem repeats follow at residues glycine 153 to proline 158, glycine 159 to proline 164, glycine 165 to histidine 170, glycine 171 to histidine 176, and glycine 177 to proline 182. Residues glycine 153–proline 182 form a 5 X 6 AA tandem repeats of G-Y-P-X-Q-[PH] region. The span at proline 158–glycine 171 shows a compositional bias: pro residues. Residues tyrosine 172–tyrosine 185 show a composition bias toward low complexity.

Homodimer in solution. Post-translationally, the N-terminus is blocked.

The protein resides in the golgi apparatus membrane. The protein localises to the endomembrane system. Its subcellular location is the cytoplasm. It is found in the cytoskeleton. Its function is as follows. May have a role in cell motility. It has high affinity for both G-actin and F-actin. Binds to vesicle membranes via mannose residues and, by way of its interaction with actin, links these membranes to the cytoskeleton. This is Comitin (comA) from Dictyostelium discoideum (Social amoeba).